Reading from the N-terminus, the 2038-residue chain is Homeotic protein female sterile (2038 aa).

The Bromo 1 domain maps to 34–140 (RNTNQLQYLI…KVFLQKIESM (107 aa)). The disordered stretch occupies residues 145 to 284 (LELEPVTAKG…TTAMAGGVGG (140 aa)). 2 stretches are compositionally biased toward low complexity: residues 177-209 (GSGT…SGLQ) and 268-279 (PGSTNTTTTAMA). The helical transmembrane segment at 330–350 (AAVAAAAAAAAAAAAAAGGAA) threads the bilayer. Residues 396–432 (KGVKRKADTTTPTANAFESPYTQMDSKSAKIATRRES) form a disordered region. The segment covering 404 to 421 (TTTPTANAFESPYTQMDS) has biased composition (polar residues). A helical transmembrane segment spans residues 451–471 (VSGVPGLGGLVAGGVAGVAVA). At serine 452 the chain carries Phosphoserine. Residues 475–584 (EKLSDALKSC…DVFEMRYANI (110 aa)) enclose the Bromo 2 domain. Disordered regions lie at residues 590 to 655 (ANAA…ERSA) and 677 to 735 (EASA…SVPG). The segment covering 593–619 (AHHHGHGHGHGHGHGHGHGHGHGHGHG) has biased composition (basic residues). A compositionally biased stretch (acidic residues) spans 636 to 649 (SSEDSSDTENESNS). Over residues 681–694 (KKKAKKKLKEKKKS) the composition is skewed to basic residues. Gly residues predominate over residues 711–735 (TGGGANAGGAGGPGSGGHGSVSVPG). The next 3 helical transmembrane spans lie at 750-770 (LNAL…AGGV), 790-810 (MAGG…AAGA), and 816-830 (AGTL…AAAG). 10 disordered regions span residues 832–858 (GGTT…SGAG), 891–956 (AGAA…SYDE), 1016–1139 (CLRK…GGNL), 1217–1260 (AVSA…ATVA), 1384–1416 (QPAG…QQQQ), 1502–1530 (MQQM…QQQH), 1580–1616 (IESM…PNAA), 1645–1728 (WSSL…VAQA), 1745–1918 (AAAA…SGAI), and 1957–2023 (MESG…GQID). A helical transmembrane segment spans residues 874–894 (GAAGAAAGAGSVGGVGGAGAA). A compositionally biased stretch (gly residues) spans 910-927 (GAGGGVGGANASAGGAGA). One can recognise an NET domain in the interval 942–1024 (DSEEEDTAKP…SCLRKKTHKK (83 aa)). Phosphoserine is present on serine 943. Positions 1017 to 1027 (LRKKTHKKPSG) are enriched in basic residues. Residues 1028 to 1046 (KSKDEQMAEKKQELEKRLQ) are compositionally biased toward basic and acidic residues. Positions 1079 to 1100 (SSSSSSSDSSSSSSSDSSSSDS) are enriched in low complexity. 2 stretches are compositionally biased toward polar residues: residues 1121 to 1131 (SNGSNVNNPSI) and 1222 to 1232 (TGQQHNKNGPN). Positions 1645–1665 (WSSLASANSPQSHTSSSSSSS) are enriched in low complexity. Phosphoserine is present on serine 1653. Positions 1680–1708 (KAKERDRLKLLEAAEKEKKNQKEAAEKEQ) are enriched in basic and acidic residues. Low complexity-rich tracts occupy residues 1716-1728 (SSSS…VAQA) and 1745-1760 (AAAA…PSGG). A helical transmembrane segment spans residues 1731 to 1751 (IAAATAAAAVTLGAAAAAALA). Over residues 1776 to 1791 (GDRDRDRDRERERERS) the composition is skewed to basic and acidic residues. Positions 1800–1813 (NGNNSSNSANSNGP) are enriched in low complexity. Gly residues-rich tracts occupy residues 1814–1828 (GSAG…GGSG) and 1835–1856 (PNSG…GGGP). Residues 1857-1884 (ALLNAGSNSNSGVGSGGAASSNSNSSVG) show a composition bias toward low complexity. The segment covering 1885-1915 (GIVGSGGPGSNSQGSSGGGGGGPASGGGMGS) has biased composition (gly residues). The helical transmembrane segment at 1939 to 1959 (VAAAVAAQAILAASPLGAMES) threads the bilayer. Phosphoserine is present on residues serine 1980 and serine 1988. Residues 1986-1997 (QSSPAQQSPQDR) are compositionally biased toward low complexity. Residues 1998 to 2017 (AAAKRAEQRRAEQERRRREA) are compositionally biased toward basic and acidic residues.

The protein resides in the membrane. In terms of biological role, required maternally for proper expression of other homeotic genes involved in pattern formation, such as Ubx. The sequence is that of Homeotic protein female sterile (fs(1)h) from Drosophila melanogaster (Fruit fly).